A 466-amino-acid chain; its full sequence is Tetratricopeptide repeat protein 38 (466 aa).

TPR repeat units follow at residues 175-212, 251-284, and 368-400; these read MPLYRQIKGMYSFGLLETRLYDEAEKMAKEALSLTPED, CHNYWHWALYHIEKGNYEAALKIFDEQVSQRCVK, and LQIAERVGLPMCQALLEFEQRNYRQAVELLKPI.

The protein belongs to the TTC38 family.

The sequence is that of Tetratricopeptide repeat protein 38 (ttc38) from Danio rerio (Zebrafish).